The primary structure comprises 157 residues: Crossover junction endodeoxyribonuclease RuvC (157 aa).

Catalysis depends on residues aspartate 7, glutamate 66, and aspartate 139. 3 residues coordinate Mg(2+): aspartate 7, glutamate 66, and aspartate 139.

Belongs to the RuvC family. As to quaternary structure, homodimer which binds Holliday junction (HJ) DNA. The HJ becomes 2-fold symmetrical on binding to RuvC with unstacked arms; it has a different conformation from HJ DNA in complex with RuvA. In the full resolvosome a probable DNA-RuvA(4)-RuvB(12)-RuvC(2) complex forms which resolves the HJ. Mg(2+) is required as a cofactor.

It is found in the cytoplasm. The catalysed reaction is Endonucleolytic cleavage at a junction such as a reciprocal single-stranded crossover between two homologous DNA duplexes (Holliday junction).. The RuvA-RuvB-RuvC complex processes Holliday junction (HJ) DNA during genetic recombination and DNA repair. Endonuclease that resolves HJ intermediates. Cleaves cruciform DNA by making single-stranded nicks across the HJ at symmetrical positions within the homologous arms, yielding a 5'-phosphate and a 3'-hydroxyl group; requires a central core of homology in the junction. The consensus cleavage sequence is 5'-(A/T)TT(C/G)-3'. Cleavage occurs on the 3'-side of the TT dinucleotide at the point of strand exchange. HJ branch migration catalyzed by RuvA-RuvB allows RuvC to scan DNA until it finds its consensus sequence, where it cleaves and resolves the cruciform DNA. This chain is Crossover junction endodeoxyribonuclease RuvC, found in Campylobacter concisus (strain 13826).